The chain runs to 1393 residues: Rab3 GTPase-activating protein non-catalytic subunit (1393 aa).

The segment at 36 to 67 (RDPSKSTDWEDDGWGAWEENEPQEPEEEGNTC) is disordered. Serine 39 bears the Phosphoserine mark. Over residues 44–64 (WEDDGWGAWEENEPQEPEEEG) the composition is skewed to acidic residues. At serine 450 the chain carries Phosphoserine. Phosphothreonine is present on threonine 901. 2 positions are modified to phosphoserine: serine 916 and serine 978.

The protein belongs to the Rab3-GAP regulatory subunit family. As to quaternary structure, the Rab3 GTPase-activating complex is a heterodimer composed of RAB3GAP1 and RAB3GAP2. The Rab3 GTPase-activating complex interacts with DMXL2. Interacts with LMAN1. As to expression, ubiquitous.

It is found in the cytoplasm. It localises to the endoplasmic reticulum. Regulatory subunit of the Rab3 GTPase-activating (Rab3GAP) complex composed of RAB3GAP1 and RAB3GAP2, which has GTPase-activating protein (GAP) activity towards various Rab3 subfamily members (RAB3A, RAB3B, RAB3C and RAB3D), RAB5A and RAB43, and guanine nucleotide exchange factor (GEF) activity towards RAB18. As part of the Rab3GAP complex, acts as a GAP for Rab3 proteins by converting active RAB3-GTP to the inactive form RAB3-GDP. Rab3 proteins are involved in regulated exocytosis of neurotransmitters and hormones. The Rab3GAP complex acts as a GEF for RAB18 by promoting the conversion of inactive RAB18-GDP to the active form RAB18-GTP. Recruits and stabilizes RAB18 at the cis-Golgi membrane in human fibroblasts where RAB18 is most likely activated. Also involved in RAB18 recruitment at the endoplasmic reticulum (ER) membrane where it maintains proper ER structure. Required for normal eye and brain development. May participate in neurodevelopmental processes such as proliferation, migration and differentiation before synapse formation, and non-synaptic vesicular release of neurotransmitters. This Homo sapiens (Human) protein is Rab3 GTPase-activating protein non-catalytic subunit.